The primary structure comprises 525 residues: Putative ribose/galactose/methyl galactoside import ATP-binding protein (525 aa).

Positions 1 to 15 (MFGSATANPPAQRNL) are enriched in polar residues. Residues 1 to 23 (MFGSATANPPAQRNLPSGDGDGG) are disordered. ABC transporter domains lie at 33 to 269 (LEIS…VGRE) and 279 to 523 (KPAG…SGHK). 65-72 (GENGAGKS) is an ATP binding site.

This sequence belongs to the ABC transporter superfamily. Carbohydrate importer 2 (CUT2) (TC 3.A.1.2) family.

Its subcellular location is the cell inner membrane. It carries out the reaction D-ribose(out) + ATP + H2O = D-ribose(in) + ADP + phosphate + H(+). The catalysed reaction is D-galactose(out) + ATP + H2O = D-galactose(in) + ADP + phosphate + H(+). In terms of biological role, part of an ABC transporter complex involved in carbohydrate import. Could be involved in ribose, galactose and/or methyl galactoside import. Responsible for energy coupling to the transport system. This chain is Putative ribose/galactose/methyl galactoside import ATP-binding protein, found in Pseudomonas syringae pv. syringae (strain B728a).